The primary structure comprises 910 residues: DNA mismatch repair protein MutS (910 aa).

Residues 1 to 11 show a composition bias toward basic and acidic residues; the sequence is MEAKVEEKEPE. Residues 1–21 form a disordered region; the sequence is MEAKVEEKEPEPVENAGPDAP. 658-665 contacts ATP; it reads GPNMGGKS.

Belongs to the DNA mismatch repair MutS family.

This protein is involved in the repair of mismatches in DNA. It is possible that it carries out the mismatch recognition step. This protein has a weak ATPase activity. The protein is DNA mismatch repair protein MutS of Brucella abortus (strain 2308).